We begin with the raw amino-acid sequence, 1031 residues long: MMS19 nucleotide excision repair protein homolog (1031 aa).

The residue at position 2 (A2) is an N-acetylalanine. HEAT repeat units follow at residues 867-905 (QRFFTDNVPALVQGFHAAPQDVKPNYLKGLSHVLNRLPK), 909-947 (LPELPTLLSLLLEALSCPDSVVQLSTLSCLQPLLLEAPQ), 950-988 (SLHVDTLVTKFLNLSSSYSMAVRIAALQCMHALTRLPTS), and 991-1029 (LPYKSQVIRALAKPLDDKKRLVRKEAVSARGEWFLLGSP). S1028 is modified (phosphoserine).

This sequence belongs to the MET18/MMS19 family. As to quaternary structure, component of the CIA complex. In the CIA complex, interacts directly with CIAO2B and CIAO3. Component of the MMXD complex, composed of CIAO1, ERCC2, CIAO2B, MMS19 and SLC25A5. Interacts with CIAO2B; the interaction is direct. Interacts with ERCC2/XPD; the interaction is direct. Interacts with ERCC3/XPB and NCOA3/RAC3. Interacts with RTEL1; the interaction mediates the association of RTEL1 with the CIA complex. Interacts with BRIP1. Interacts with KIF4A; the interaction facilitates the transfer of Fe-S clusters to KIF4A to ensure proper localization of KIF4A to the mitotic machinery components. Interacts with CCDC117; the interaction is indirect. Ubiquitinated; undergoes 'Lys-48'-linked polyubiquitination. In terms of tissue distribution, ubiquitously expressed with higher expression in testis.

Its subcellular location is the nucleus. The protein resides in the cytoplasm. The protein localises to the cytoskeleton. It is found in the spindle. Key component of the cytosolic iron-sulfur protein assembly (CIA) complex, a multiprotein complex that mediates the incorporation of iron-sulfur cluster into apoproteins specifically involved in DNA metabolism and genomic integrity. In the CIA complex, MMS19 acts as an adapter between early-acting CIA components and a subset of cellular target Fe/S proteins such as ERCC2/XPD, FANCJ and RTEL1, thereby playing a key role in nucleotide excision repair (NER), homologous recombination-mediated double-strand break DNA repair, DNA replication and RNA polymerase II (POL II) transcription. As a CIA complex component and in collaboration with CIAO1 and CIAO2, binds to and facilitates the assembly of most cytosolic-nuclear Fe/S proteins. As part of the mitotic spindle-associated MMXD complex, plays a role in chromosome segregation, probably by facilitating iron-sulfur cluster assembly into ERCC2/XPD. Together with CIAO2, facilitates the transfer of Fe-S clusters to the motor protein KIF4A, which ensures proper localization of KIF4A to mitotic machinery components to promote the progression of mitosis. Indirectly acts as a transcriptional coactivator of estrogen receptor (ER), via its role in iron-sulfur insertion into some component of the TFIIH-machinery. The polypeptide is MMS19 nucleotide excision repair protein homolog (Mus musculus (Mouse)).